Consider the following 370-residue polypeptide: Uroporphyrinogen decarboxylase (370 aa).

Substrate-binding positions include 29-33, Asp79, Tyr155, Ser210, and His342; that span reads RQAGR.

This sequence belongs to the uroporphyrinogen decarboxylase family. In terms of assembly, homodimer.

It localises to the cytoplasm. It catalyses the reaction uroporphyrinogen III + 4 H(+) = coproporphyrinogen III + 4 CO2. It participates in porphyrin-containing compound metabolism; protoporphyrin-IX biosynthesis; coproporphyrinogen-III from 5-aminolevulinate: step 4/4. In terms of biological role, catalyzes the decarboxylation of four acetate groups of uroporphyrinogen-III to yield coproporphyrinogen-III. The polypeptide is Uroporphyrinogen decarboxylase (Acidovorax ebreus (strain TPSY) (Diaphorobacter sp. (strain TPSY))).